A 234-amino-acid chain; its full sequence is Leucyl/phenylalanyl-tRNA--protein transferase (234 aa).

Belongs to the L/F-transferase family.

Its subcellular location is the cytoplasm. It catalyses the reaction N-terminal L-lysyl-[protein] + L-leucyl-tRNA(Leu) = N-terminal L-leucyl-L-lysyl-[protein] + tRNA(Leu) + H(+). The catalysed reaction is N-terminal L-arginyl-[protein] + L-leucyl-tRNA(Leu) = N-terminal L-leucyl-L-arginyl-[protein] + tRNA(Leu) + H(+). It carries out the reaction L-phenylalanyl-tRNA(Phe) + an N-terminal L-alpha-aminoacyl-[protein] = an N-terminal L-phenylalanyl-L-alpha-aminoacyl-[protein] + tRNA(Phe). Functions in the N-end rule pathway of protein degradation where it conjugates Leu, Phe and, less efficiently, Met from aminoacyl-tRNAs to the N-termini of proteins containing an N-terminal arginine or lysine. The protein is Leucyl/phenylalanyl-tRNA--protein transferase of Pectobacterium atrosepticum (strain SCRI 1043 / ATCC BAA-672) (Erwinia carotovora subsp. atroseptica).